The primary structure comprises 417 residues: Tyrosine--tRNA ligase (417 aa).

Tyrosine 39 contributes to the L-tyrosine binding site. A 'HIGH' region motif is present at residues 44-53; the sequence is CTAPSLHVGH. L-tyrosine is bound by residues tyrosine 176 and glutamine 180. Positions 236-240 match the 'KMSKS' region motif; that stretch reads KMGKT. ATP is bound at residue lysine 239. The 68-residue stretch at 350 to 417 folds into the S4 RNA-binding domain; that stretch reads AGVLALFVKA…KKRHVLLRPA (68 aa).

It belongs to the class-I aminoacyl-tRNA synthetase family. TyrS type 1 subfamily. As to quaternary structure, homodimer.

Its subcellular location is the cytoplasm. It carries out the reaction tRNA(Tyr) + L-tyrosine + ATP = L-tyrosyl-tRNA(Tyr) + AMP + diphosphate + H(+). Functionally, catalyzes the attachment of tyrosine to tRNA(Tyr) in a two-step reaction: tyrosine is first activated by ATP to form Tyr-AMP and then transferred to the acceptor end of tRNA(Tyr). This is Tyrosine--tRNA ligase from Nitrobacter winogradskyi (strain ATCC 25391 / DSM 10237 / CIP 104748 / NCIMB 11846 / Nb-255).